Reading from the N-terminus, the 562-residue chain is Arginine--tRNA ligase 2 (562 aa).

Positions proline 122–histidine 132 match the 'HIGH' region motif.

Belongs to the class-I aminoacyl-tRNA synthetase family. Monomer.

It is found in the cytoplasm. The catalysed reaction is tRNA(Arg) + L-arginine + ATP = L-arginyl-tRNA(Arg) + AMP + diphosphate. This Bacillus anthracis protein is Arginine--tRNA ligase 2 (argS2).